The sequence spans 73 residues: Sec-independent protein translocase protein TatA (73 aa).

Residues 1 to 21 (MFGLGAPELILILILALIIFG) form a helical membrane-spanning segment. Positions 52 to 73 (EAAKIDDGNNNSDKEKATRQAS) are disordered.

It belongs to the TatA/E family. As to quaternary structure, forms a complex with TatC.

Its subcellular location is the cell membrane. Functionally, part of the twin-arginine translocation (Tat) system that transports large folded proteins containing a characteristic twin-arginine motif in their signal peptide across membranes. TatA could form the protein-conducting channel of the Tat system. The sequence is that of Sec-independent protein translocase protein TatA from Moorella thermoacetica (strain ATCC 39073 / JCM 9320).